A 325-amino-acid chain; its full sequence is Interferon regulatory factor 1 (325 aa).

Positions 5–113 (RMRMRPWLEM…SAVRVYRMLP (109 aa)) form a DNA-binding region, IRF tryptophan pentad repeat. Lysine 78 bears the N6-acetyllysine mark. The segment at 92–165 (EEVKDQSRNK…TLPDDHSSYT (74 aa)) is disordered. The span at 141–157 (GDSSPDTFSDGLSSSTL) shows a compositional bias: polar residues. Glycyl lysine isopeptide (Lys-Gly) (interchain with G-Cter in SUMO) cross-links involve residues lysine 275 and lysine 299.

The protein belongs to the IRF family. Monomer. Homodimer. Interacts with EP300. Interacts with MYD88. Interacts with PIAS3. Interacts with SPOP. Post-translationally, phosphorylated by CK2 and this positively regulates its activity. In terms of processing, sumoylation represses the transcriptional activity and displays enhanced resistance to protein degradation. Sumoylated by UBE2I/UBC9 and SUMO1. Inactivates the tumor suppressor activity. Elevated levels in tumor cells. Major site is Lys-275. Sumoylation is enhanced by PIAS3. Desumoylated by SENP1 in tumor cells and appears to compete with ubiquitination on C-terminal sites. Ubiquitinated in a SPOP-depedent manner. Appears to compete with sumoylation on C-terminal sites.

The protein resides in the nucleus. The protein localises to the cytoplasm. With respect to regulation, activated by MYD88. Its function is as follows. Transcriptional regulator which displays a remarkable functional diversity in the regulation of cellular responses. Regulates transcription of IFN and IFN-inducible genes, host response to viral and bacterial infections, regulation of many genes expressed during hematopoiesis, inflammation, immune responses and cell proliferation and differentiation, regulation of the cell cycle and induction of growth arrest and programmed cell death following DNA damage. Stimulates both innate and acquired immune responses through the activation of specific target genes and can act as a transcriptional activator and repressor regulating target genes by binding to an interferon-stimulated response element (ISRE) in their promoters. Has an essentail role in IFNG-dependent immunity to mycobacteria. Competes with the transcriptional repressor ZBED2 for binding to a common consensus sequence in gene promoters. Its target genes for transcriptional activation activity include: genes involved in anti-viral response, such as IFN-alpha/beta, RIGI, TNFSF10/TRAIL, ZBP1, OAS1/2, PIAS1/GBP, EIF2AK2/PKR and RSAD2/viperin; antibacterial response, such as GBP2, GBP5 and NOS2/INOS; anti-proliferative response, such as p53/TP53, LOX and CDKN1A; apoptosis, such as BBC3/PUMA, CASP1, CASP7 and CASP8; immune response, such as IL7, IL12A/B and IL15, PTGS2/COX2 and CYBB; DNA damage responses and DNA repair, such as POLQ/POLH; MHC class I expression, such as TAP1, PSMB9/LMP2, PSME1/PA28A, PSME2/PA28B and B2M and MHC class II expression, such as CIITA; metabolic enzymes, such as ACOD1/IRG1. Represses genes involved in anti-proliferative response, such as BIRC5/survivin, CCNB1, CCNE1, CDK1, CDK2 and CDK4 and in immune response, such as FOXP3, IL4, ANXA2 and TLR4. Stimulates p53/TP53-dependent transcription through enhanced recruitment of EP300 leading to increased acetylation of p53/TP53. Plays an important role in immune response directly affecting NK maturation and activity, macrophage production of IL12, Th1 development and maturation of CD8+ T-cells. Also implicated in the differentiation and maturation of dendritic cells and in the suppression of regulatory T (Treg) cells development. Acts as a tumor suppressor and plays a role not only in antagonism of tumor cell growth but also in stimulating an immune response against tumor cells. The protein is Interferon regulatory factor 1 (IRF1) of Homo sapiens (Human).